Here is a 155-residue protein sequence, read N- to C-terminus: SsrA-binding protein (155 aa).

The disordered stretch occupies residues 135 to 155; it reads KRESLKRRQDQRDIQRAMKNY.

The protein belongs to the SmpB family.

The protein resides in the cytoplasm. Required for rescue of stalled ribosomes mediated by trans-translation. Binds to transfer-messenger RNA (tmRNA), required for stable association of tmRNA with ribosomes. tmRNA and SmpB together mimic tRNA shape, replacing the anticodon stem-loop with SmpB. tmRNA is encoded by the ssrA gene; the 2 termini fold to resemble tRNA(Ala) and it encodes a 'tag peptide', a short internal open reading frame. During trans-translation Ala-aminoacylated tmRNA acts like a tRNA, entering the A-site of stalled ribosomes, displacing the stalled mRNA. The ribosome then switches to translate the ORF on the tmRNA; the nascent peptide is terminated with the 'tag peptide' encoded by the tmRNA and targeted for degradation. The ribosome is freed to recommence translation, which seems to be the essential function of trans-translation. In Trichormus variabilis (strain ATCC 29413 / PCC 7937) (Anabaena variabilis), this protein is SsrA-binding protein.